Reading from the N-terminus, the 266-residue chain is Eukaryotic translation initiation factor 3 subunit J (266 aa).

Disordered stretches follow at residues 1–111 (MAPS…EKDA) and 217–266 (NEKM…DDFM). The span at 26–44 (DEEEEDVLDSWDAAEDSEV) shows a compositional bias: acidic residues. Positions 40-82 (EDSEVEREKAAKAAEAKAKAEAEAAANKKSKAQRIQEKKAQRK) form a coiled coil. Basic and acidic residues-rich tracts occupy residues 45–61 (EREK…KAEA) and 73–85 (RIQE…KADA). A compositionally biased stretch (acidic residues) spans 86 to 97 (DAEDSDDSDEDE). Composition is skewed to basic and acidic residues over residues 98–111 (AERR…EKDA) and 218–230 (EKMK…DKGN). Residues 254–266 (SYDDDGLDDDDFM) are compositionally biased toward acidic residues.

This sequence belongs to the eIF-3 subunit J family. Component of the eukaryotic translation initiation factor 3 (eIF-3) complex.

It localises to the cytoplasm. Component of the eukaryotic translation initiation factor 3 (eIF-3) complex, which is involved in protein synthesis of a specialized repertoire of mRNAs and, together with other initiation factors, stimulates binding of mRNA and methionyl-tRNAi to the 40S ribosome. The eIF-3 complex specifically targets and initiates translation of a subset of mRNAs involved in cell proliferation. This is Eukaryotic translation initiation factor 3 subunit J (hcr1) from Aspergillus niger (strain ATCC MYA-4892 / CBS 513.88 / FGSC A1513).